Here is a 1485-residue protein sequence, read N- to C-terminus: MIERGKFRSLTLVNWNGFFARTFDLDELVTTLSGGNGAGKSTTMAAFVTALIPDLTLLHFRNTTEAGATSGSRDKGLHGKLRAGVCYSTLDVVNSRHQRVVVGVRLQQVAGRDRKVDIKPFTIQGLPTAIQPTEILTELVAERQARVLSLPELKERVEAMEGVQFKQFNSITDYHSLMFDLGVIPKRLRSSADRSKFYRLIEASLYGGISSAITRSLRDYLLPENSGVRKAFQDMEAALRENRMTLEAIRVTQSDRDLFKHLISEATSYVAADYMRHANERRIHLDSALVLRRDLFSSRKQLVTEQYRHVEMSRELAEQSGAESDLETDYQAASDHLNLVQTAMRQQEKIERYQSDLEELTYRLEEQSEVVSEASEQQADNEARAEAAELEVDELKSQLADYQQALDVQQTRAIQYQQALQALERARALCQLPELTADNAEEWLETFHAKEQEATESLLQLEQKLSVADAAHSQFEQAYQLVVNIAGEVSRSEAWQTARELLRDWPSQQHLAERVQPLRMRLSELEQRLRAQQDAERLLQEFCKRQGNAYQPEELEALQRELESQVEELSLSVSDAGERRMAMRQELEQLKLKIQELTARAPVWLAAQDALSQLSEQSGEALEDSRQVTEYMQQLLERERETTVERDEIAASKRAIEAQIERLSQPSGAEDARLIALAERFGGVLLSEIYDDVTIDDAPYFSALYGPSRHGIVVPDLSLVREHLQGLDDCPEDLYLIEGDPQSFDDSVFAVEEHEKAVVVKIADRQWRYSRYPEVPLFGRAARENRLETLYQERDRLAERYATLSFDVQKTQRTHQAFSRFIGSHLAVAFDADPEAEIRLLNTRRGEIERALNAHEDQNQQQRQQFDQAKEGISALNRLIPLVSLLLDETLTDRVEEITEELAEAQEAARYIQQHGVSLTKLEPLLSVLQSDPQQHEQLQESYVLAQNSQRLAKQQAFALTEVVQRRAHFSYTDSAGMLTENSDLNDKLRQRLEQAEAERTRAREQLRQYQSQFTQYSQVLASLKSSYDAKRDMLKELSQELVDIGVPADANAEARARARRDELHAALSTNRSRRNQLEKQLTFCEAEMDSLQKKLRKLERDYHQIREQVVNAKAGWCAVMRMVKDNGVERRLHRRELAYMDGDELRSMSDKALGALRLAVADNEHLRDVLRLSEDPKRPERKIQFYIAVYQHLRERIRQDIIRTDDPVEAIEQMEIELGRLTEELTAREQKLAISSKSVSNIIRKTIHREQNRIRMLNQGLQAVSFGQVKSVRLNVNVREAHATLLDVLSEQQEQHQDLFNSNRLTFSEALAKLYQRLNPQMDMGQRLPQTIGEELLDYRNYLELEVEVYRGADGWLRAESGALSTGEAIGTGMSILVMVVQSWEEESRRLRGKDISPCRLLFLDEAARLDAKSIATLFELCERLEMQLIIAAPENISPEKGTTYKLVRKVFQNHEHVHVVGLRGFANEMPSLPPIAAELQQGG.

34–41 (GGNGAGKS) serves as a coordination point for ATP. 6 coiled-coil regions span residues 337–480 (LNLV…QAYQ), 509–605 (QHLA…PVWL), 780–805 (RAAR…ATLS), 835–915 (EAEI…IQQH), 977–1116 (GMLT…AKAG), and 1210–1235 (EAIE…KLAI). The segment at 666-783 (PSGAEDARLI…EVPLFGRAAR (118 aa)) is flexible hinge.

The protein belongs to the SMC family. MukB subfamily. As to quaternary structure, homodimerization via its hinge domain. Binds to DNA via its C-terminal region. Interacts, and probably forms a ternary complex, with MukE and MukF via its C-terminal region. The complex formation is stimulated by calcium or magnesium. Interacts with tubulin-related protein FtsZ.

It is found in the cytoplasm. The protein resides in the nucleoid. Its function is as follows. Plays a central role in chromosome condensation, segregation and cell cycle progression. Functions as a homodimer, which is essential for chromosome partition. Involved in negative DNA supercoiling in vivo, and by this means organize and compact chromosomes. May achieve or facilitate chromosome segregation by condensation DNA from both sides of a centrally located replisome during cell division. In Yersinia pestis bv. Antiqua (strain Antiqua), this protein is Chromosome partition protein MukB.